The sequence spans 537 residues: Tegument protein BRRF2 (537 aa).

Disordered regions lie at residues 321–366, 378–398, 414–466, and 486–537; these read RPRF…AVPP, AKQN…ETSP, SKQH…DEEF, and GLRV…LSVV. The span at 334-347 shows a compositional bias: polar residues; it reads EPQQTCSQLTSRGN. Low complexity predominate over residues 423 to 441; sequence SSQAAPSFSSVAPVASLSG. Residues 492–517 show a composition bias toward acidic residues; it reads DEDEDGSEDGEFSDLDLSDSDHEGDE.

Belongs to the lymphocryptovirus BRRF2 family.

It is found in the virion tegument. This Homo sapiens (Human) protein is Tegument protein BRRF2.